A 1070-amino-acid polypeptide reads, in one-letter code: DNA-directed RNA polymerase subunit beta (1070 aa).

This sequence belongs to the RNA polymerase beta chain family. In terms of assembly, in plastids the minimal PEP RNA polymerase catalytic core is composed of four subunits: alpha, beta, beta', and beta''. When a (nuclear-encoded) sigma factor is associated with the core the holoenzyme is formed, which can initiate transcription.

The protein localises to the plastid. Its subcellular location is the chloroplast. It catalyses the reaction RNA(n) + a ribonucleoside 5'-triphosphate = RNA(n+1) + diphosphate. Functionally, DNA-dependent RNA polymerase catalyzes the transcription of DNA into RNA using the four ribonucleoside triphosphates as substrates. The chain is DNA-directed RNA polymerase subunit beta from Daucus carota (Wild carrot).